The sequence spans 442 residues: Membrane sensor protein UhpC (442 aa).

The Cytoplasmic portion of the chain corresponds to M1–H30. Residues I31–A51 traverse the membrane as a helical segment. Over A52–D66 the chain is Periplasmic. A helical membrane pass occupies residues I67–I87. Residues V88–R95 are Cytoplasmic-facing. A helical membrane pass occupies residues Y96–L118. The Periplasmic segment spans residues W119–F121. The helical transmembrane segment at A122–T144 threads the bilayer. At A145–A162 the chain is on the cytoplasmic side. A helical transmembrane segment spans residues H163–W183. Position 184 (R184) is a topological domain, periplasmic. The helical transmembrane segment at V185–L205 threads the bilayer. The Cytoplasmic portion of the chain corresponds to R206–K244. Residues Y245–V265 traverse the membrane as a helical segment. Over R266 to N289 the chain is Periplasmic. A helical transmembrane segment spans residues T290 to S310. At D311–N322 the chain is on the cytoplasmic side. A helical transmembrane segment spans residues L323 to S343. At Y344 to Q347 the chain is on the periplasmic side. The helical transmembrane segment at A348–A368 threads the bilayer. The Cytoplasmic portion of the chain corresponds to A369 to G379. Residues A380–L400 form a helical membrane-spanning segment. Over A401–T410 the chain is Periplasmic. Residues G411–L431 form a helical membrane-spanning segment. The Cytoplasmic portion of the chain corresponds to N432–A442.

This sequence belongs to the major facilitator superfamily. Organophosphate:Pi antiporter (OPA) (TC 2.A.1.4) family.

Its subcellular location is the cell inner membrane. In terms of biological role, part of the UhpABC signaling cascade that controls the expression of the hexose phosphate transporter UhpT. UhpC senses external glucose-6-phosphate and interacts with the histidine kinase UhpB, leading to the stimulation of the autokinase activity of UhpB. The polypeptide is Membrane sensor protein UhpC (uhpC) (Salmonella typhimurium (strain LT2 / SGSC1412 / ATCC 700720)).